The chain runs to 259 residues: UPF0246 protein PA14_18590 (259 aa).

The protein belongs to the UPF0246 family.

The chain is UPF0246 protein PA14_18590 from Pseudomonas aeruginosa (strain UCBPP-PA14).